Here is a 273-residue protein sequence, read N- to C-terminus: Dermonecrotic toxin LarSicTox-alphaIB1b (273 aa).

Residue His-5 is part of the active site. Positions 25 and 27 each coordinate Mg(2+). The active-site Nucleophile is the His-41. Disulfide bonds link Cys-45–Cys-51 and Cys-47–Cys-190. Asp-85 provides a ligand contact to Mg(2+). N-linked (GlcNAc...) asparagine glycosylation is present at Asn-250.

This sequence belongs to the arthropod phospholipase D family. Class II subfamily. The cofactor is Mg(2+). As to expression, expressed by the venom gland.

The protein resides in the secreted. The enzyme catalyses an N-(acyl)-sphingosylphosphocholine = an N-(acyl)-sphingosyl-1,3-cyclic phosphate + choline. It catalyses the reaction an N-(acyl)-sphingosylphosphoethanolamine = an N-(acyl)-sphingosyl-1,3-cyclic phosphate + ethanolamine. The catalysed reaction is a 1-acyl-sn-glycero-3-phosphocholine = a 1-acyl-sn-glycero-2,3-cyclic phosphate + choline. It carries out the reaction a 1-acyl-sn-glycero-3-phosphoethanolamine = a 1-acyl-sn-glycero-2,3-cyclic phosphate + ethanolamine. Functionally, dermonecrotic toxins cleave the phosphodiester linkage between the phosphate and headgroup of certain phospholipids (sphingolipid and lysolipid substrates), forming an alcohol (often choline) and a cyclic phosphate. This toxin acts on sphingomyelin (SM). It may also act on ceramide phosphoethanolamine (CPE), lysophosphatidylcholine (LPC) and lysophosphatidylethanolamine (LPE), but not on lysophosphatidylserine (LPS), and lysophosphatidylglycerol (LPG). It acts by transphosphatidylation, releasing exclusively cyclic phosphate products as second products. Induces dermonecrosis, hemolysis, increased vascular permeability, edema, inflammatory response, and platelet aggregation. The protein is Dermonecrotic toxin LarSicTox-alphaIB1b of Loxosceles arizonica (Arizona brown spider).